We begin with the raw amino-acid sequence, 194 residues long: Ribonuclease HII (194 aa).

The RNase H type-2 domain maps to 16 to 194 (CIVAGIDEAG…PYHRRSFRCC (179 aa)). Residues D22, E23, and D113 each contribute to the a divalent metal cation site.

It belongs to the RNase HII family. It depends on Mn(2+) as a cofactor. The cofactor is Mg(2+).

The protein resides in the cytoplasm. It carries out the reaction Endonucleolytic cleavage to 5'-phosphomonoester.. Its function is as follows. Endonuclease that specifically degrades the RNA of RNA-DNA hybrids. This chain is Ribonuclease HII, found in Rickettsia massiliae (strain Mtu5).